The sequence spans 597 residues: Arginine--tRNA ligase (597 aa).

The 'HIGH' region signature appears at 125–135 (PNTNKPLHLGH).

Belongs to the class-I aminoacyl-tRNA synthetase family. Monomer.

Its subcellular location is the cytoplasm. The enzyme catalyses tRNA(Arg) + L-arginine + ATP = L-arginyl-tRNA(Arg) + AMP + diphosphate. This Bacteroides fragilis (strain ATCC 25285 / DSM 2151 / CCUG 4856 / JCM 11019 / LMG 10263 / NCTC 9343 / Onslow / VPI 2553 / EN-2) protein is Arginine--tRNA ligase.